The primary structure comprises 53 residues: Non-classical export protein 1 (53 aa).

A helical membrane pass occupies residues 7-29 (FLLGKFSDPLLAIMVGCLSYYVY).

It belongs to the NCE101 family.

Its subcellular location is the membrane. Functionally, involved in a novel pathway of export of proteins that lack a cleavable signal sequence. May be part of the export machinery or may also be a substrate for non-classical export. This chain is Non-classical export protein 1 (NCE101), found in Saccharomyces cerevisiae (strain ATCC 204508 / S288c) (Baker's yeast).